The primary structure comprises 84 residues: Exodeoxyribonuclease 7 small subunit (84 aa).

It belongs to the XseB family. As to quaternary structure, heterooligomer composed of large and small subunits.

Its subcellular location is the cytoplasm. It catalyses the reaction Exonucleolytic cleavage in either 5'- to 3'- or 3'- to 5'-direction to yield nucleoside 5'-phosphates.. Bidirectionally degrades single-stranded DNA into large acid-insoluble oligonucleotides, which are then degraded further into small acid-soluble oligonucleotides. The protein is Exodeoxyribonuclease 7 small subunit of Bartonella henselae (strain ATCC 49882 / DSM 28221 / CCUG 30454 / Houston 1) (Rochalimaea henselae).